Here is a 149-residue protein sequence, read N- to C-terminus: Protein DOWN-REGULATED IN DIF1 11 (149 aa).

The signal sequence occupies residues 1–22 (MEKAILITFLIATTSMVYQTIG).

Mostly expressed in embryo sac cells. Restricted to synergid cells, especially in the filiform apparatus of mature female gametophyte, via MYB98-mediated transcription regulation. Also detected at low levels in egg and central cells.

The chain is Protein DOWN-REGULATED IN DIF1 11 from Arabidopsis thaliana (Mouse-ear cress).